The primary structure comprises 511 residues: BAR/IMD domain-containing adapter protein 2-like 1 (511 aa).

Residues 1–249 (MSRGPEEVNR…MNMIEEIKTP (249 aa)) form the IMD domain. Positions 115–154 (MNATLKRYQTEHKNKLESLEKSQAELKKIRRKSQGSRNAL) form a coiled coil. Threonine 248 and threonine 257 each carry phosphothreonine. A phosphoserine mark is found at serine 261 and serine 281. A disordered region spans residues 302-328 (NNPATAAPNSQRVNNSTGTSEDPSLQR). Residues 303-328 (NPATAAPNSQRVNNSTGTSEDPSLQR) are compositionally biased toward polar residues. 2 positions are modified to phosphoserine: serine 331 and serine 354. Residues 339–402 (MKKQKVKTIF…PSSYTKLLEE (64 aa)) enclose the SH3 domain. The residue at position 412 (threonine 412) is a Phosphothreonine. Serine 414, serine 420, and serine 422 each carry phosphoserine. Positions 451 to 511 (RRADSARTTS…TNDRSAPIIR (61 aa)) are disordered. The tract at residues 483–511 (PPFLSGENPFATVKLRPTVTNDRSAPIIR) is binds F-actin.

In terms of assembly, interacts with RAC1. Binds to F-actin. Interacts with FASLG. Interacts (via SH3 domain) with E.coli effector protein EspF(U) (via PXXP motifs). Identified in a complex containing at least WASL, BAIAP2L1 and E.coli EspF(U). Interacts with E.coli intimin receptor Tir. Post-translationally, phosphorylated on tyrosine in response to insulin.

It localises to the cytoplasm. It is found in the cytoskeleton. May function as adapter protein. Involved in the formation of clusters of actin bundles. Plays a role in the reorganization of the actin cytoskeleton in response to bacterial infection. This chain is BAR/IMD domain-containing adapter protein 2-like 1 (BAIAP2L1), found in Homo sapiens (Human).